Here is a 174-residue protein sequence, read N- to C-terminus: Gamma-crystallin F (174 aa).

Beta/gamma crystallin 'Greek key' domains are found at residues 2–40 (GKITFYEDRGFQGRHYECSSDHSNLQPYFSRCNSIRVDS) and 41–83 (GCWM…RLIP). The interval 84–87 (HTGS) is connecting peptide. Beta/gamma crystallin 'Greek key' domains follow at residues 88–128 (HRLR…NVLE) and 129–171 (GWWV…RRAV).

It belongs to the beta/gamma-crystallin family.

In terms of biological role, crystallins are the dominant structural components of the vertebrate eye lens. This chain is Gamma-crystallin F (CRYGF), found in Bos taurus (Bovine).